The following is a 412-amino-acid chain: GTPase Obg (412 aa).

The 159-residue stretch at 1–159 (MKFLDQAKIF…RWIWLRLKMI (159 aa)) folds into the Obg domain. Residues 160–327 (ADAGLVGLPN…ILARLFTHIR (168 aa)) form the OBG-type G domain. GTP-binding positions include 166–173 (GLPNAGKS), 191–195 (FTTLH), 212–215 (DIPG), 279–282 (NKCD), and 308–310 (SGV). 2 residues coordinate Mg(2+): serine 173 and threonine 193. The disordered stretch occupies residues 335-412 (AVPAASPIFG…ADDEEDDAEE (78 aa)). Over residues 385–412 (NDGDEVDEDYDDEDLEEVADDEEDDAEE) the composition is skewed to acidic residues.

It belongs to the TRAFAC class OBG-HflX-like GTPase superfamily. OBG GTPase family. In terms of assembly, monomer. Requires Mg(2+) as cofactor.

The protein resides in the cytoplasm. In terms of biological role, an essential GTPase which binds GTP, GDP and possibly (p)ppGpp with moderate affinity, with high nucleotide exchange rates and a fairly low GTP hydrolysis rate. Plays a role in control of the cell cycle, stress response, ribosome biogenesis and in those bacteria that undergo differentiation, in morphogenesis control. The chain is GTPase Obg from Paramagnetospirillum magneticum (strain ATCC 700264 / AMB-1) (Magnetospirillum magneticum).